Here is a 102-residue protein sequence, read N- to C-terminus: MSASKATMLILFALFLSDILLVSIPRAEAQLIVPCKTSEQCKSIRCSNGSAQCVNKQCQCPSLKQIYSVTDVSCKTVSDCVASHQCPTGLSACIEGKCICLP.

Residues 1 to 29 (MSASKATMLILFALFLSDILLVSIPRAEA) form the signal peptide. Disulfide bonds link C35–C53, C41–C58, C46–C60, C74–C93, C80–C98, and C86–C100.

This sequence belongs to the DEFL family.

The protein resides in the secreted. The polypeptide is Putative defensin-like protein 298 (Arabidopsis thaliana (Mouse-ear cress)).